Reading from the N-terminus, the 829-residue chain is Periplasmic nitrate reductase (829 aa).

Positions 1-31 form a signal peptide, tat-type signal; it reads MKLSRRDFMKANAVAAAAAAAGLTIPTVARA. The 4Fe-4S Mo/W bis-MGD-type domain maps to 40–96; that stretch reads ITWDKAPCRFCGTGCGVLVGTQNGRIVASQGDPDAPVNRGLNCIKGYFLPKIMYGKD. [4Fe-4S] cluster contacts are provided by cysteine 47, cysteine 50, cysteine 54, and cysteine 82. Mo-bis(molybdopterin guanine dinucleotide)-binding positions include lysine 84, glutamine 151, asparagine 176, cysteine 180, 213-220, 263-265, methionine 373, glutamine 377, asparagine 483, 509-510, lysine 532, aspartate 559, and 719-728; these read WGSNMAEM, QSD, SD, and TGRVLEHWHT. Phenylalanine 795 contacts substrate. Residues asparagine 803 and lysine 820 each coordinate Mo-bis(molybdopterin guanine dinucleotide).

Belongs to the prokaryotic molybdopterin-containing oxidoreductase family. NasA/NapA/NarB subfamily. As to quaternary structure, component of the periplasmic nitrate reductase NapAB complex composed of NapA and NapB. [4Fe-4S] cluster is required as a cofactor. Requires Mo-bis(molybdopterin guanine dinucleotide) as cofactor. Predicted to be exported by the Tat system. The position of the signal peptide cleavage has not been experimentally proven.

It is found in the periplasm. It catalyses the reaction 2 Fe(II)-[cytochrome] + nitrate + 2 H(+) = 2 Fe(III)-[cytochrome] + nitrite + H2O. In terms of biological role, catalytic subunit of the periplasmic nitrate reductase complex NapAB. Receives electrons from NapB and catalyzes the reduction of nitrate to nitrite. The polypeptide is Periplasmic nitrate reductase (Edwardsiella ictaluri (strain 93-146)).